We begin with the raw amino-acid sequence, 77 residues long: Large ribosomal subunit protein uL24 (77 aa).

The protein belongs to the universal ribosomal protein uL24 family. In terms of assembly, part of the 50S ribosomal subunit.

Its function is as follows. One of two assembly initiator proteins, it binds directly to the 5'-end of the 23S rRNA, where it nucleates assembly of the 50S subunit. One of the proteins that surrounds the polypeptide exit tunnel on the outside of the subunit. This chain is Large ribosomal subunit protein uL24, found in Campylobacter fetus subsp. fetus (strain 82-40).